The primary structure comprises 165 residues: Transcriptional repressor NrdR (165 aa).

A zinc finger spans residues C3–C34. An ATP-cone domain is found at V49–D139.

The protein belongs to the NrdR family. Zn(2+) is required as a cofactor.

Its function is as follows. Negatively regulates transcription of bacterial ribonucleotide reductase nrd genes and operons by binding to NrdR-boxes. In Desulforapulum autotrophicum (strain ATCC 43914 / DSM 3382 / VKM B-1955 / HRM2) (Desulfobacterium autotrophicum), this protein is Transcriptional repressor NrdR.